Here is a 447-residue protein sequence, read N- to C-terminus: Putative bacteriocin-SkfA transport system permease protein SkfF (447 aa).

Topologically, residues 1–3 (MPF) are cytoplasmic. A helical membrane pass occupies residues 4–22 (LIMLLFVGAIGFQVSFVSR). At 23 to 29 (STTWDMS) the chain is on the extracellular side. Residues 30–50 (IAGWVLTGVFILYTAFGLFSN) form a helical membrane-spanning segment. Over 51 to 59 (RLPSQMADI) the chain is Cytoplasmic. The helical transmembrane segment at 60 to 80 (IWLYGTATSFSKVVYSVLFFS) threads the bilayer. The Extracellular segment spans residues 81–85 (VTWKA). A helical transmembrane segment spans residues 86–104 (LLWIISAIFGDVLIVLLSG). The Cytoplasmic segment spans residues 105-113 (DHINLLGRS). Residues 114 to 134 (IIFVGLFFIAEVWLMSVSCAR) form a helical membrane-spanning segment. The Extracellular segment spans residues 135–141 (TVKKMKR). Residues 142–160 (VYVLVFLLMLGIYSICLYR) traverse the membrane as a helical segment. At 161 to 189 (FFFLQHSSGIWESIARFISGVGLVFDTLS) the chain is on the cytoplasmic side. Residues 190 to 208 (PLYVVVFIGIITVSFMTIA) traverse the membrane as a helical segment. Over 209–247 (FTSRQVEMKESLVKEAEFWEEFQERQFGSGQIIQKPKTT) the chain is Extracellular. A helical transmembrane segment spans residues 248–268 (WWGLQGLNGIWSFLWLELLLF). The Cytoplasmic portion of the chain corresponds to 269 to 297 (KKYLFFHSIHTVMLSGVFYVVIFMYPEWF). A helical transmembrane segment spans residues 298–318 (YLLFFLIVSAVMLSSYYSGIV). Topologically, residues 319–341 (RHSQSGTLHLFPGALWKKIIILE) are extracellular. The chain crosses the membrane as a helical span at residues 342 to 360 (LTNTVWLYILYCVSITFMA). The Cytoplasmic portion of the chain corresponds to 361-363 (VGN). The helical transmembrane segment at 364-382 (LVYWYIYGLGIYIWFMTIR) threads the bilayer. Topologically, residues 383–404 (LFAFTHTNRNDIKLSLPQYYKS) are extracellular. A helical transmembrane segment spans residues 405–423 (FFMALGLSGICLYVIHLLT). Residues 424–426 (ADW) lie on the Cytoplasmic side of the membrane. Residues 427 to 447 (YTLVVVVCIGSLSWCLFYRFR) traverse the membrane as a helical segment.

Its subcellular location is the cell membrane. Its function is as follows. Probably part of the ABC transporter SkfEF involved in the export of the bacteriocin SKF. Probably responsible for the translocation of bacteriocin SkfA across the membrane. This chain is Putative bacteriocin-SkfA transport system permease protein SkfF, found in Bacillus subtilis (strain 168).